We begin with the raw amino-acid sequence, 178 residues long: CASP-like protein 5A1 (178 aa).

The disordered stretch occupies residues 1–24 (MFASRPAVHPVEAPPPTDPVEQPT). Residues 1–37 (MFASRPAVHPVEAPPPTDPVEQPTGVLMKDLPGMPGT) lie on the Cytoplasmic side of the membrane. Residues 38–58 (AGGLGLRVAQFVFAGVALAVM) traverse the membrane as a helical segment. The Extracellular portion of the chain corresponds to 59–69 (ASTSDFPSVTA). A helical membrane pass occupies residues 70–90 (FCYLVAATIMQCLWSFSLAIV). The Cytoplasmic portion of the chain corresponds to 91–105 (DIYALLVKRCLRNRR). A helical transmembrane segment spans residues 106–126 (AVCLFAIGDGITAALTFGAAC). Over 127–152 (SSAGITVLIDNDLNICAENHCGSFKT) the chain is Extracellular. The helical transmembrane segment at 153-173 (ATALAFMSWFALTPSFLLNFW) threads the bilayer. Residues 174-178 (SMAAR) are Cytoplasmic-facing.

This sequence belongs to the Casparian strip membrane proteins (CASP) family. In terms of assembly, homodimer and heterodimers.

It is found in the cell membrane. The sequence is that of CASP-like protein 5A1 from Brachypodium distachyon (Purple false brome).